The sequence spans 950 residues: Oxysterol-binding protein-related protein 1 (950 aa).

Positions 1–237 (MNTEAEQQLL…NKVVHKALKR (237 aa)) are interaction with RAB7A. 3 ANK repeats span residues 47 to 76 (LGWT…KVNM), 80 to 109 (MGDT…DSTV), and 175 to 204 (LGNT…DPSL). The 100-residue stretch at 235–334 (LKRYEGPLWK…WLEAIEEHSA (100 aa)) folds into the PH domain. The stretch at 430–463 (NFKLEQEQEKNKILSEALETLATEHHELERSLVE) forms a coiled coil. Residues 469-483 (SILSEEEFYDALSGS) carry the FFAT motif. S499 is subject to Phosphoserine. 2 disordered regions span residues 502–530 (ENEV…SNGI) and 795–821 (KKNT…VPDS). Residues 879 to 913 (RAMENGEIDLASEEKKRLEEKQRAARKNRSKSEED) are a coiled coil.

Belongs to the OSBP family. Interacts (via FFAT motif) with VAPA and VAPB. Interacts with the GTP-bound form of RAB7A. Interacts with OAS1B. Interacts (via FFAT motif) with MOSPD2 (via MSP domain). In terms of tissue distribution, ubiquitous.

Its subcellular location is the late endosome. Functionally, binds phospholipids; exhibits strong binding to phosphatidic acid and weak binding to phosphatidylinositol 3-phosphate. Stabilizes GTP-bound RAB7A on late endosomes/lysosomes and alters functional properties of late endocytic compartments via its interaction with RAB7A. Binds 25-hydroxycholesterol and cholesterol. In Mus musculus (Mouse), this protein is Oxysterol-binding protein-related protein 1.